The following is a 906-amino-acid chain: Protein translocase subunit SecA (906 aa).

ATP contacts are provided by residues Gln-87, Gly-105–Thr-109, and Asp-512. The segment at Arg-879–Ser-906 is disordered. Cys-890, Cys-892, Cys-901, and His-902 together coordinate Zn(2+).

It belongs to the SecA family. As to quaternary structure, monomer and homodimer. Part of the essential Sec protein translocation apparatus which comprises SecA, SecYEG and auxiliary proteins SecDF-YajC and YidC. Requires Zn(2+) as cofactor.

Its subcellular location is the cell inner membrane. The protein resides in the cytoplasm. The catalysed reaction is ATP + H2O + cellular proteinSide 1 = ADP + phosphate + cellular proteinSide 2.. Functionally, part of the Sec protein translocase complex. Interacts with the SecYEG preprotein conducting channel. Has a central role in coupling the hydrolysis of ATP to the transfer of proteins into and across the cell membrane, serving both as a receptor for the preprotein-SecB complex and as an ATP-driven molecular motor driving the stepwise translocation of polypeptide chains across the membrane. The polypeptide is Protein translocase subunit SecA (Shewanella frigidimarina (strain NCIMB 400)).